Consider the following 81-residue polypeptide: MASLKVFSFALLIVLTFSVIGMIYNVESGGSLCCNSHPKFGKCNTNNDEQRCNRWCHNGCGNGKGGYYKSMSHGGQCHYYC.

A signal peptide spans 1–21 (MASLKVFSFALLIVLTFSVIG). Intrachain disulfides connect Cys33–Cys81 and Cys52–Cys77.

The protein belongs to the DEFL family.

Its subcellular location is the secreted. The protein is Putative defensin-like protein 26 of Arabidopsis thaliana (Mouse-ear cress).